We begin with the raw amino-acid sequence, 54 residues long: Large ribosomal subunit protein bL33 (54 aa).

It belongs to the bacterial ribosomal protein bL33 family.

This chain is Large ribosomal subunit protein bL33, found in Stenotrophomonas maltophilia (strain K279a).